The following is a 448-amino-acid chain: uncharacterized protein (448 aa).

Positions 187–198 (SKGDRGDADDRG) are enriched in basic and acidic residues. Disordered stretches follow at residues 187-221 (SKGD…LPTR), 243-270 (LQVP…GATM), and 291-361 (LSGL…LPNG). Low complexity predominate over residues 243–261 (LQVPGGTSAAIPSASSTPS). A compositionally biased stretch (basic and acidic residues) spans 307 to 334 (FDERGQEVRDPADYEHANEPDERRADDR).

The protein to M.tuberculosis Rv0025 and Rv0739.

This is an uncharacterized protein from Mycobacterium tuberculosis (strain CDC 1551 / Oshkosh).